A 390-amino-acid chain; its full sequence is O-glycoside alpha-1,2-mannosyltransferase omh1 (390 aa).

Catalysis depends on Glu-279, which acts as the Nucleophile.

This sequence belongs to the glycosyltransferase 15 family.

The protein resides in the endoplasmic reticulum. It is found in the golgi apparatus. In terms of biological role, mannosyltransferase involved in O-glycosylation of cell wall and secreted proteins. Plays a major role in extending alpha-1,2-linked mannose in the O-glycan pathway. In Schizosaccharomyces pombe (strain 972 / ATCC 24843) (Fission yeast), this protein is O-glycoside alpha-1,2-mannosyltransferase omh1 (omh1).